A 197-amino-acid polypeptide reads, in one-letter code: Probable calcium-binding protein CML21 (197 aa).

Residues 1-33 (MLRPPPPSSVLTASAAAARPPASVVQPQRQAAH) are disordered. A compositionally biased stretch (low complexity) spans 9–30 (SVLTASAAAARPPASVVQPQRQ). 3 consecutive EF-hand domains span residues 37–72 (AETLRLRRVFEMFDRDGDGVITPAELSGALCRLGAR), 126–161 (EKEADMREAFGVFDEDGDGYISAAELQAVLSRMGLP), and 164–197 (ACMARVRDMIAAADRDSDGRVDYEEFKAMMAAGN). Residues Asp50, Asp52, Asp54, Glu61, Asp139, Asp141, Asp143, Tyr145, Glu150, Asp177, Asp179, Asp181, Arg183, and Glu188 each contribute to the Ca(2+) site.

Functionally, potential calcium sensor. The protein is Probable calcium-binding protein CML21 (CML21) of Oryza sativa subsp. japonica (Rice).